Here is a 242-residue protein sequence, read N- to C-terminus: 1-(5-phosphoribosyl)-5-[(5-phosphoribosylamino)methylideneamino] imidazole-4-carboxamide isomerase (242 aa).

Asp8 acts as the Proton acceptor in catalysis. Asp129 (proton donor) is an active-site residue.

The protein belongs to the HisA/HisF family.

It localises to the cytoplasm. It catalyses the reaction 1-(5-phospho-beta-D-ribosyl)-5-[(5-phospho-beta-D-ribosylamino)methylideneamino]imidazole-4-carboxamide = 5-[(5-phospho-1-deoxy-D-ribulos-1-ylimino)methylamino]-1-(5-phospho-beta-D-ribosyl)imidazole-4-carboxamide. Its pathway is amino-acid biosynthesis; L-histidine biosynthesis; L-histidine from 5-phospho-alpha-D-ribose 1-diphosphate: step 4/9. The chain is 1-(5-phosphoribosyl)-5-[(5-phosphoribosylamino)methylideneamino] imidazole-4-carboxamide isomerase from Clostridium botulinum (strain Kyoto / Type A2).